A 47-amino-acid polypeptide reads, in one-letter code: Photosystem II reaction center protein K (47 aa).

Positions methionine 1 to alanine 10 are excised as a propeptide. Residues alanine 20–tryptophan 40 traverse the membrane as a helical segment.

Belongs to the PsbK family. As to quaternary structure, PSII is composed of 1 copy each of membrane proteins PsbA, PsbB, PsbC, PsbD, PsbE, PsbF, PsbH, PsbI, PsbJ, PsbK, PsbL, PsbM, PsbT, PsbX, PsbY, Psb30/Ycf12, peripheral proteins PsbO, CyanoQ (PsbQ), PsbU, PsbV and a large number of cofactors. It forms dimeric complexes.

The protein localises to the cellular thylakoid membrane. Its function is as follows. One of the components of the core complex of photosystem II (PSII). PSII is a light-driven water:plastoquinone oxidoreductase that uses light energy to abstract electrons from H(2)O, generating O(2) and a proton gradient subsequently used for ATP formation. It consists of a core antenna complex that captures photons, and an electron transfer chain that converts photonic excitation into a charge separation. The chain is Photosystem II reaction center protein K from Prochlorococcus marinus (strain MIT 9303).